We begin with the raw amino-acid sequence, 91 residues long: MALSLFTVGQLIFLFWTMRITEANPDPAAKAVPAAAAPDTASDAAAAAAATAATAAAAAAATAATAAKAAALTAANAAAAAAATAAAAARG.

A signal peptide spans 1–21 (MALSLFTVGQLIFLFWTMRIT). The propeptide at 22 to 39 (EANPDPAAKAVPAAAAPD) is removed by a dipeptidylpeptidase.

The protein belongs to the type-I AFP family. As to expression, detected in blood serum (at protein level).

It localises to the secreted. Its function is as follows. Contributes to protect fish blood from freezing at subzero sea water temperatures. Lowers the blood freezing point. Binds to nascent ice crystals and prevents further growth. This is Ice-structuring protein 2A7 from Pseudopleuronectes americanus (Winter flounder).